The sequence spans 157 residues: Transcription elongation factor GreA (157 aa).

It belongs to the GreA/GreB family.

In terms of biological role, necessary for efficient RNA polymerase transcription elongation past template-encoded arresting sites. The arresting sites in DNA have the property of trapping a certain fraction of elongating RNA polymerases that pass through, resulting in locked ternary complexes. Cleavage of the nascent transcript by cleavage factors such as GreA or GreB allows the resumption of elongation from the new 3'terminus. GreA releases sequences of 2 to 3 nucleotides. This chain is Transcription elongation factor GreA, found in Brucella anthropi (strain ATCC 49188 / DSM 6882 / CCUG 24695 / JCM 21032 / LMG 3331 / NBRC 15819 / NCTC 12168 / Alc 37) (Ochrobactrum anthropi).